A 95-amino-acid polypeptide reads, in one-letter code: MAFKPLHDRVLVRRVQSDEKTKGGLIIPDTAKEKPAEGEVVSCGEGARKDSGELIAMSVKAGDRVLFGKWSGTEVTIDGAELLIMKESDILGILS.

This sequence belongs to the GroES chaperonin family. In terms of assembly, heptamer of 7 subunits arranged in a ring. Interacts with the chaperonin GroEL.

It localises to the cytoplasm. Its function is as follows. Together with the chaperonin GroEL, plays an essential role in assisting protein folding. The GroEL-GroES system forms a nano-cage that allows encapsulation of the non-native substrate proteins and provides a physical environment optimized to promote and accelerate protein folding. GroES binds to the apical surface of the GroEL ring, thereby capping the opening of the GroEL channel. The sequence is that of Co-chaperonin GroES from Cereibacter sphaeroides (strain KD131 / KCTC 12085) (Rhodobacter sphaeroides).